A 179-amino-acid chain; its full sequence is MARLKEIYHKDVMQKLRSDFSYANIMEVPKIVKVVVNMGLGEAIQNVKILDSAAAELAAITGQKTVITKAKKSIATFKLRQGMPIGCMVTLRRAKMYEFLDRLMNVSLPRVRDFKGVSAKAFDGKGNYTLGIKEQLIFPEINYDAVDKIKGMNITIVTSAKTDEEGRALLKYLGMPFRN.

This sequence belongs to the universal ribosomal protein uL5 family. Part of the 50S ribosomal subunit; part of the 5S rRNA/L5/L18/L25 subcomplex. Contacts the 5S rRNA and the P site tRNA. Forms a bridge to the 30S subunit in the 70S ribosome.

Functionally, this is one of the proteins that bind and probably mediate the attachment of the 5S RNA into the large ribosomal subunit, where it forms part of the central protuberance. In the 70S ribosome it contacts protein S13 of the 30S subunit (bridge B1b), connecting the 2 subunits; this bridge is implicated in subunit movement. Contacts the P site tRNA; the 5S rRNA and some of its associated proteins might help stabilize positioning of ribosome-bound tRNAs. The polypeptide is Large ribosomal subunit protein uL5 (Pelobacter propionicus (strain DSM 2379 / NBRC 103807 / OttBd1)).